A 437-amino-acid polypeptide reads, in one-letter code: Purple acid phosphatase 21 (437 aa).

The first 25 residues, 1-25 (MKKMKIFGFLISFSLFFLSPFVCQA), serve as a signal peptide directing secretion. Asparagine 30 carries N-linked (GlcNAc...) asparagine glycosylation. Residues aspartate 152, aspartate 179, and tyrosine 182 each coordinate Fe cation. Aspartate 179 contributes to the Zn(2+) binding site. 2 residues coordinate Zn(2+): asparagine 212 and histidine 296. Asparagine 212 is a binding site for substrate. Histidine 306 acts as the Proton donor in catalysis. Histidine 333 is a binding site for Zn(2+). Position 333-335 (333-335 (HVH)) interacts with substrate. Residue histidine 335 coordinates Fe cation.

The protein belongs to the metallophosphoesterase superfamily. Purple acid phosphatase family. Homodimer. Fe cation is required as a cofactor. Zn(2+) serves as cofactor. Expressed flowers and siliques.

Its subcellular location is the secreted. It catalyses the reaction a phosphate monoester + H2O = an alcohol + phosphate. The chain is Purple acid phosphatase 21 (PAP21) from Arabidopsis thaliana (Mouse-ear cress).